Reading from the N-terminus, the 101-residue chain is uncharacterized protein (101 aa).

This is an uncharacterized protein from Mycoplasma pneumoniae (strain ATCC 29342 / M129 / Subtype 1) (Mycoplasmoides pneumoniae).